The primary structure comprises 929 residues: Bifunctional uridylyltransferase/uridylyl-removing enzyme (929 aa).

The uridylyltransferase stretch occupies residues 1 to 383 (MDSVTTEHKQ…RPTPAKRRVP (383 aa)). The tract at residues 384–739 (DSDDFIVDNN…VGFDEVRGVT (356 aa)) is uridylyl-removing. The 124-residue stretch at 499–622 (VDEHLIRCVG…VQSVEQMKLL (124 aa)) folds into the HD domain. ACT domains are found at residues 740-822 (ELTI…VVAR) and 850-927 (VIEV…AVQP).

It belongs to the GlnD family. Requires Mg(2+) as cofactor.

The catalysed reaction is [protein-PII]-L-tyrosine + UTP = [protein-PII]-uridylyl-L-tyrosine + diphosphate. It catalyses the reaction [protein-PII]-uridylyl-L-tyrosine + H2O = [protein-PII]-L-tyrosine + UMP + H(+). Its activity is regulated as follows. Uridylyltransferase (UTase) activity is inhibited by glutamine, while glutamine activates uridylyl-removing (UR) activity. Its function is as follows. Modifies, by uridylylation and deuridylylation, the PII regulatory proteins (GlnB and homologs), in response to the nitrogen status of the cell that GlnD senses through the glutamine level. Under low glutamine levels, catalyzes the conversion of the PII proteins and UTP to PII-UMP and PPi, while under higher glutamine levels, GlnD hydrolyzes PII-UMP to PII and UMP (deuridylylation). Thus, controls uridylylation state and activity of the PII proteins, and plays an important role in the regulation of nitrogen fixation and metabolism. The polypeptide is Bifunctional uridylyltransferase/uridylyl-removing enzyme (Bradyrhizobium diazoefficiens (strain JCM 10833 / BCRC 13528 / IAM 13628 / NBRC 14792 / USDA 110)).